Consider the following 468-residue polypeptide: Cytochrome P450-like protein L532 (468 aa).

2 helical membrane-spanning segments follow: residues 22-42 and 172-192; these read WFAY…FGLI and VTVL…GVDV. C415 provides a ligand contact to heme.

The protein belongs to the cytochrome P450 family. The cofactor is heme.

It localises to the host membrane. The protein localises to the virion. The chain is Cytochrome P450-like protein L532 from Acanthamoeba polyphaga mimivirus (APMV).